A 282-amino-acid chain; its full sequence is Trihydroxynaphthalene reductase PfmaI (282 aa).

NADP(+)-binding residues include Ile-41, Asn-114, and Arg-147. Catalysis depends on proton donor residues Ser-164 and Tyr-178. NADP(+) is bound by residues Tyr-178, Lys-182, Ile-211, and Thr-213. The active-site Lowers pKa of active site Tyr is Lys-182.

The protein belongs to the short-chain dehydrogenases/reductases (SDR) family.

The protein operates within pigment biosynthesis; melanin biosynthesis. Its function is as follows. Trihydroxynaphthalene reductase involved the biosynthesis of dihydroxynaphthalene (DHN)-melanin, a bluish-green pigment forming a dark layer in the conidial wall that protects the conidia from UV radiations. The first step of the pathway is the production of the pentaketide 1,3,6,8-tetrahydroxynaphthalene (1,3,6,8-THN or T4HN) by the polyketide synthase PfmaE though condensation of acetyl-CoA with malonyl-CoA. T4HN is not stable and easily oxidizes into the stable form flaviolin. T4HN is also substrate of the hydroxynaphthalene reductase PfmaG to yield scytalone. The scytalone dehydratase PfmaJ then reduces scytalone to 1,3,8-THN. 1,3,8-THN is then substrate of the hydroxynaphthalene reductase PfmaI to yield vermelone. Vermelone is further converted by the multicopper oxidase PfmaD to 1,8-DHN. Finally the laccase PFICI_06862 transforms 1,8-DHN to DHN-melanin. The roles of the 5-oxoprolinase PfmaA and the proline iminopeptidase PfmaB within the cluster have not been elucidated yet. In Pestalotiopsis fici (strain W106-1 / CGMCC3.15140), this protein is Trihydroxynaphthalene reductase PfmaI.